We begin with the raw amino-acid sequence, 372 residues long: 4-hydroxy-3-methylbut-2-en-1-yl diphosphate synthase (flavodoxin) (372 aa).

Residues cysteine 270, cysteine 273, cysteine 305, and glutamate 312 each coordinate [4Fe-4S] cluster.

It belongs to the IspG family. [4Fe-4S] cluster is required as a cofactor.

The enzyme catalyses (2E)-4-hydroxy-3-methylbut-2-enyl diphosphate + oxidized [flavodoxin] + H2O + 2 H(+) = 2-C-methyl-D-erythritol 2,4-cyclic diphosphate + reduced [flavodoxin]. The protein operates within isoprenoid biosynthesis; isopentenyl diphosphate biosynthesis via DXP pathway; isopentenyl diphosphate from 1-deoxy-D-xylulose 5-phosphate: step 5/6. In terms of biological role, converts 2C-methyl-D-erythritol 2,4-cyclodiphosphate (ME-2,4cPP) into 1-hydroxy-2-methyl-2-(E)-butenyl 4-diphosphate. The chain is 4-hydroxy-3-methylbut-2-en-1-yl diphosphate synthase (flavodoxin) from Aliivibrio salmonicida (strain LFI1238) (Vibrio salmonicida (strain LFI1238)).